Consider the following 319-residue polypeptide: MamJ paralog LimJ (319 aa).

Disordered stretches follow at residues methionine 1–valine 59 and alanine 145–glutamate 176. A compositionally biased stretch (low complexity) spans alanine 30–isoleucine 52. A compositionally biased stretch (acidic residues) spans proline 150 to proline 164.

The protein belongs to the magnetosome MamJ protein family.

The protein resides in the magnetosome. In terms of biological role, regulates the dynamic behavior of MamK filaments; paralog MamJ also promotes MamK turnover. At least one other protein besides MamJ and LimJ is required for MamK turnover. Might connect magnetosomes to MamK filaments. This is MamJ paralog LimJ from Paramagnetospirillum magneticum (strain ATCC 700264 / AMB-1) (Magnetospirillum magneticum).